A 346-amino-acid chain; its full sequence is 2-oxoglutarate synthase subunit KorA (346 aa).

Heterotetramer of the KorA, KorB, KorC and KorD subunits.

It catalyses the reaction 2 oxidized [2Fe-2S]-[ferredoxin] + 2-oxoglutarate + CoA = succinyl-CoA + 2 reduced [2Fe-2S]-[ferredoxin] + CO2 + H(+). This chain is 2-oxoglutarate synthase subunit KorA (korA), found in Archaeoglobus fulgidus (strain ATCC 49558 / DSM 4304 / JCM 9628 / NBRC 100126 / VC-16).